A 230-amino-acid chain; its full sequence is Ion-translocating oxidoreductase complex subunit E (230 aa).

Transmembrane regions (helical) follow at residues 11–31 (GMWA…LLAV), 39–59 (LGLG…VSLV), 69–89 (IPVF…LMNA), 93–113 (GLYL…IIIG), 132–152 (FWMG…REII), and 182–202 (SFLL…LIAL).

The protein belongs to the NqrDE/RnfAE family. As to quaternary structure, the complex is composed of six subunits: RnfA, RnfB, RnfC, RnfD, RnfE and RnfG.

Its subcellular location is the cell inner membrane. Part of a membrane-bound complex that couples electron transfer with translocation of ions across the membrane. The protein is Ion-translocating oxidoreductase complex subunit E of Vibrio atlanticus (strain LGP32) (Vibrio splendidus (strain Mel32)).